A 415-amino-acid polypeptide reads, in one-letter code: Alpha-N-acetylgalactosaminidase (415 aa).

Residues 1–17 (MLQKTVLLLALVAQVLM) form the signal peptide. 3 disulfides stabilise this stretch: Cys-38-Cys-80, Cys-42-Cys-49, and Cys-127-Cys-158. Substrate contacts are provided by residues 78-79 (DD) and Lys-154. Asp-156 (nucleophile) is an active-site residue. The N-linked (GlcNAc...) asparagine glycan is linked to Asn-177. A disulfide bond links Cys-187 and Cys-209. Ser-188 provides a ligand contact to substrate. A glycan (N-linked (GlcNAc...) asparagine) is linked at Asn-201. Positions 213 and 217 each coordinate substrate. Catalysis depends on Asp-217, which acts as the Proton donor. Ser-322 and Ser-332 each carry phosphoserine. The N-linked (GlcNAc...) asparagine glycan is linked to Asn-385.

Belongs to the glycosyl hydrolase 27 family. In terms of assembly, homodimer.

It is found in the lysosome. The catalysed reaction is Cleavage of non-reducing alpha-(1-&gt;3)-N-acetylgalactosamine residues from human blood group A and AB mucin glycoproteins, Forssman hapten and blood group A lacto series glycolipids.. It catalyses the reaction a neolactoside IV(3)-alpha-GalNAc,IV(2)-alpha-Fuc-nLc4Cer(d18:1(4E)) + H2O = a neolactoside IV(2)-alpha-Fuc-nLc4Cer(d18:1(4E)) + N-acetyl-alpha-D-galactosamine. The enzyme catalyses a neolactoside IV(3)-alpha-GalNAc,IV(2)-alpha-Fuc-nLc4Cer(d18:0) + H2O = a neolactoside IV(2)-alpha-Fuc-nLc4Cer(d18:0) + N-acetyl-alpha-D-galactosamine. It carries out the reaction a globoside IV3GalNAc-Gb4Cer + H2O = N-acetyl-alpha-D-galactosamine + a globoside Gb4Cer. Removes terminal alpha-N-acetylgalactosamine residues from glycolipids and glycopeptides. Required for the breakdown of glycolipids. This chain is Alpha-N-acetylgalactosaminidase (Naga), found in Mus musculus (Mouse).